Consider the following 292-residue polypeptide: Elongation factor Ts (292 aa).

The interval 82-85 (TDFV) is involved in Mg(2+) ion dislocation from EF-Tu.

It belongs to the EF-Ts family.

The protein localises to the cytoplasm. In terms of biological role, associates with the EF-Tu.GDP complex and induces the exchange of GDP to GTP. It remains bound to the aminoacyl-tRNA.EF-Tu.GTP complex up to the GTP hydrolysis stage on the ribosome. This Legionella pneumophila subsp. pneumophila (strain Philadelphia 1 / ATCC 33152 / DSM 7513) protein is Elongation factor Ts.